Here is a 119-residue protein sequence, read N- to C-terminus: DNA-binding protein MMP0157 (119 aa).

Positions 1–12 are enriched in basic and acidic residues; the sequence is MNPEEIRQRRLQ. The interval 1-35 is disordered; that stretch reads MNPEEIRQRRLQEMQAKAQAQGAANDPEAQRQMQE.

Belongs to the PDCD5 family.

The polypeptide is DNA-binding protein MMP0157 (Methanococcus maripaludis (strain DSM 14266 / JCM 13030 / NBRC 101832 / S2 / LL)).